We begin with the raw amino-acid sequence, 421 residues long: C4-dicarboxylate transport protein (421 aa).

The next 8 helical transmembrane spans lie at 9–29 (VQVITAVIIGVIVGLVWPDVG), 39–59 (FINAVKMVIAPIIFFTIVLGI), 76–96 (FIYFEVVTTLALIIGLFVVNI), 145–165 (GDILQVLFFSILFGVGLAALG), 185–205 (IIGYIMRAAPIGAFGAMAYTI), 219–239 (LMMSVYITMFLFVFVALNIIC), 316–336 (VFGVDLSIGQQITIILVLMLT), and 348–368 (FIVLASTLSALQVIPLEGLAL).

It belongs to the dicarboxylate/amino acid:cation symporter (DAACS) (TC 2.A.23) family.

It localises to the cell membrane. Functionally, responsible for the transport of succinate and fumarate, but not malate, across the membrane. This chain is C4-dicarboxylate transport protein (dctA), found in Bacillus subtilis (strain 168).